A 224-amino-acid chain; its full sequence is Claudin-19 (224 aa).

Residues 1 to 7 (MANSGLQ) lie on the Cytoplasmic side of the membrane. A helical transmembrane segment spans residues 8-28 (LLGYFLALGGWVGIIASTALP). Residues 29-81 (QWKQSSYAGDAIITAVGLYEGLWMSCASQSTGQVQCKLYDSLLALDGHIQSAR) are Extracellular-facing. Cysteine 54 and cysteine 64 are disulfide-bonded. Residues 82–102 (ALMVVAVLLGFVAMVLSVVGM) form a helical membrane-spanning segment. Over 103–117 (KCTRVGDSNPIAKGR) the chain is Cytoplasmic. The chain crosses the membrane as a helical span at residues 118–138 (VAIAGGALFILAGLCTLTAVS). At 139–160 (WYATLVTQEFFNPSTPVNARYE) the chain is on the extracellular side. The chain crosses the membrane as a helical span at residues 161 to 181 (FGPALFVGWASAGLAVLGGSF). Residues 182–224 (LCCTCPEPERPNSSPQPYRPGPSAAAREPVVKLPASAKGPLGV) are Cytoplasmic-facing. Residues 191–224 (RPNSSPQPYRPGPSAAAREPVVKLPASAKGPLGV) form a disordered region.

The protein belongs to the claudin family. Can form homo- and heteropolymeric tight junction strands. Interacts with other claudins including CLDN3, CLDN10, CLDN16 and CLDN18 with highest affinity for CLDN16. Interacts (via PDZ-binding motif TRV) with TJP1 (via PDZ domain).

It is found in the cell junction. Its subcellular location is the tight junction. The protein localises to the cell membrane. It catalyses the reaction Mg(2+)(in) = Mg(2+)(out). The enzyme catalyses Ca(2+)(in) = Ca(2+)(out). It carries out the reaction Na(+)(in) = Na(+)(out). The catalysed reaction is K(+)(in) = K(+)(out). It catalyses the reaction Rb(+)(in) = Rb(+)(out). The enzyme catalyses Cs(+)(in) = Cs(+)(out). It carries out the reaction Li(+)(in) = Li(+)(out). Forms paracellular channels: coassembles with CLDN16 into tight junction strands with cation-selective channels through the strands, conveying epithelial permeability in a process known as paracellular tight junction permeability. Involved in the maintenance of ion gradients along the nephron. In the thick ascending limb (TAL) of Henle's loop, facilitates sodium paracellular permeability from the interstitial compartment to the lumen, contributing to the lumen-positive transepithelial potential that drives paracellular magnesium and calcium reabsorption. Forms paracellular barriers on its own. In the peripheral nervous system, represents a major constituent of the tight junctions in Schwann cells and contributes to electrical sealing. During retinal neurogenesis, may regulate the barrier properties of tight junctions in retinal pigment epithelium, required for proper retinal tissue differentiation and vision. This Homo sapiens (Human) protein is Claudin-19.